Here is a 148-residue protein sequence, read N- to C-terminus: MGFTEKQEALVNASYEAFKQNLPGNSVLFYSFILEKAPAAKGMFSFLKDSDGVPQNNPSLQAHAEKVFGLVRDSAAQLRATGVVVLADASLGSVHVQKGVLDPHFVVVKEALLKTLKEAAGATWSDEVSNAWEVAYDGLSAAIKKAMS.

In terms of domain architecture, Globin spans 2 to 148 (GFTEKQEALV…LSAAIKKAMS (147 aa)). Y30 carries the post-translational modification Nitrated tyrosine. S45 is a binding site for heme b. At S45 the chain carries Phosphoserine. H63 contacts O2. Heme b contacts are provided by K66, H95, and K98. Y136 is subject to Nitrated tyrosine.

It belongs to the plant globin family. As to quaternary structure, monomer. In terms of processing, nitrated in effective nodules and particularly in hypoxic conditions; this mechanism may play a protective role in the symbiosis by buffering toxic peroxynitrite NO(2)(-). Nitration level decrease during nodule senescence. Phosphorylation at Ser-45 disrupts the molecular environment of its porphyrin ring oxygen binding pocket, thus leading to a reduced oxygen consumption and to the delivery of oxygen O(2) to symbiosomes. As to expression, stem nodules.

Its subcellular location is the cytoplasm. The protein localises to the cytosol. It localises to the nucleus. Its function is as follows. Leghemoglobin that reversibly binds oxygen O(2) through a pentacoordinated heme iron. In stem nodules, facilitates the diffusion of oxygen to the bacteroids while preventing the bacterial nitrogenase from being inactivated by buffering dioxygen, nitric oxide and carbon monoxide, and promoting the formation of reactive oxygen species (ROS, e.g. H(2)O(2)). This role is essential for symbiotic nitrogen fixation (SNF). This is Leghemoglobin 2 from Sesbania rostrata.